A 513-amino-acid polypeptide reads, in one-letter code: MSAKKPLALVILDGWGYREDNSDNAIANANTPVMDSLIANEANTLISASGFDVGLPDGQMGNSEVGHTNIGAGRVVYQDLTRITKSIADGDFFENEALTTAMDKAINAGKAVHIMGLMSPGGVHSHEDHIAAAIEMAAKRGAEKIYLHCFLDGRDTPPRSAQNSLERFDALFAELGKGRTASLVGRYYAMDRDNNWDRVEVAYNLLSAAKADFTVDSAVAGLTDAYSRDENDEFVKATEIRAEGQESAAMVDGDTVIFMNYRADRAREITRAFEADFTSFVRTQTPALAEFVMLTRYAANIKLPAAFPPATLKNTLGEWLSKKGKKQLRISETEKYAHVTFFFNGGVEDEFDGETRSLVASPKVATYDLQPEMSAPELTEKLVAAIKGGEFDTIICNYPNGDMVGHTGVYDAAVKACEALDGCIGQVVEAIKSVGGQLLITADHGNAEMMINPETGGVHTAHTNLPVPLIYVGDKSLTLKDGGKLSDLAPTMLSLSDIEIPAEMTGQVLFDLK.

Residues D13 and S63 each coordinate Mn(2+). Residue S63 is the Phosphoserine intermediate of the active site. Residues H124, 154–155 (RD), R186, R192, 262–265 (RADR), and K335 contribute to the substrate site. Positions 402, 406, 443, 444, and 462 each coordinate Mn(2+).

The protein belongs to the BPG-independent phosphoglycerate mutase family. In terms of assembly, monomer. Requires Mn(2+) as cofactor.

It catalyses the reaction (2R)-2-phosphoglycerate = (2R)-3-phosphoglycerate. The protein operates within carbohydrate degradation; glycolysis; pyruvate from D-glyceraldehyde 3-phosphate: step 3/5. In terms of biological role, catalyzes the interconversion of 2-phosphoglycerate and 3-phosphoglycerate. The polypeptide is 2,3-bisphosphoglycerate-independent phosphoglycerate mutase (Photobacterium profundum (strain SS9)).